The following is a 335-amino-acid chain: Avermitilol synthase (335 aa).

The Mg(2+) site is built by Asp80, Asp84, Asn219, Ser223, and Glu227. Residues 80 to 84 (DDQFD) carry the DDXXD motif motif.

Belongs to the terpene synthase family. Mg(2+) serves as cofactor.

It carries out the reaction (2E,6E)-farnesyl diphosphate + H2O = avermitilol + diphosphate. Catalyzes the cyclization of farnesyl diphosphate to avermitilol. This chain is Avermitilol synthase (tpc1), found in Streptomyces avermitilis (strain ATCC 31267 / DSM 46492 / JCM 5070 / NBRC 14893 / NCIMB 12804 / NRRL 8165 / MA-4680).